A 176-amino-acid chain; its full sequence is MNPSHPAVHPVEAPPTDVHHAPRVRMKDYQGMPGTLGGLALRLGQFCFAVVAFSIMLSTDDFSTVTAFCYLVAATVLQCLWSLALAVIDGYALLVKRSLRNSLVVSLFVVGDGVTATLTFAAACASAGITVLIGNDLRECDQNHCGKYETATAMAFLSWFMVSPSFLLTFWLLASR.

At 1-35 (MNPSHPAVHPVEAPPTDVHHAPRVRMKDYQGMPGT) the chain is on the cytoplasmic side. Residues 36–56 (LGGLALRLGQFCFAVVAFSIM) form a helical membrane-spanning segment. Over 57-67 (LSTDDFSTVTA) the chain is Extracellular. Residues 68-88 (FCYLVAATVLQCLWSLALAVI) form a helical membrane-spanning segment. Topologically, residues 89-102 (DGYALLVKRSLRNS) are cytoplasmic. The helical transmembrane segment at 103–123 (LVVSLFVVGDGVTATLTFAAA) threads the bilayer. The Extracellular segment spans residues 124-152 (CASAGITVLIGNDLRECDQNHCGKYETAT). Residues 153-173 (AMAFLSWFMVSPSFLLTFWLL) form a helical membrane-spanning segment. Topologically, residues 174-176 (ASR) are cytoplasmic.

The protein belongs to the Casparian strip membrane proteins (CASP) family. In terms of assembly, homodimer and heterodimers.

The protein localises to the cell membrane. This is CASP-like protein 5A1 from Ginkgo biloba (Ginkgo).